The primary structure comprises 93 residues: Small ribosomal subunit protein uS19 (93 aa).

The protein belongs to the universal ribosomal protein uS19 family.

Functionally, protein S19 forms a complex with S13 that binds strongly to the 16S ribosomal RNA. This chain is Small ribosomal subunit protein uS19, found in Geobacter sulfurreducens (strain ATCC 51573 / DSM 12127 / PCA).